The following is a 239-amino-acid chain: 1-(5-phosphoribosyl)-5-[(5-phosphoribosylamino)methylideneamino] imidazole-4-carboxamide isomerase (239 aa).

Catalysis depends on D8, which acts as the Proton acceptor. D129 acts as the Proton donor in catalysis.

This sequence belongs to the HisA/HisF family.

It is found in the cytoplasm. The catalysed reaction is 1-(5-phospho-beta-D-ribosyl)-5-[(5-phospho-beta-D-ribosylamino)methylideneamino]imidazole-4-carboxamide = 5-[(5-phospho-1-deoxy-D-ribulos-1-ylimino)methylamino]-1-(5-phospho-beta-D-ribosyl)imidazole-4-carboxamide. It participates in amino-acid biosynthesis; L-histidine biosynthesis; L-histidine from 5-phospho-alpha-D-ribose 1-diphosphate: step 4/9. The chain is 1-(5-phosphoribosyl)-5-[(5-phosphoribosylamino)methylideneamino] imidazole-4-carboxamide isomerase from Bacillus cereus (strain B4264).